The sequence spans 157 residues: V-type proton ATPase 16 kDa proteolipid subunit c (157 aa).

At 1 to 10 the chain is on the lumenal side; it reads MALPEENPVY. The chain crosses the membrane as a helical span at residues 11–33; that stretch reads GPFFGVMGAAAAIIFSALGAAYG. At 34–55 the chain is on the cytoplasmic side; that stretch reads TAKSGTGIAAMSVMRPELIMKS. A helical membrane pass occupies residues 56–76; sequence IIPVVMAGIIAIYGLVVAVLI. The Lumenal segment spans residues 77–94; the sequence is AGSLDTPTKYSLYKGFIH. A helical membrane pass occupies residues 95-116; that stretch reads LGAGLAVGFSGLAAGFAIGIVG. The Cytoplasmic segment spans residues 117–128; sequence DAGVRGTAQQPR. Residues 129 to 154 form a helical membrane-spanning segment; it reads LFVGMILILIFAEVLGLYGLIVAIYL. Residues 155 to 157 are Lumenal-facing; sequence YTK.

This sequence belongs to the V-ATPase proteolipid subunit family. In terms of assembly, V-ATPase is a heteromultimeric enzyme made up of two complexes: the ATP-hydrolytic V1 complex and the proton translocation V0 complex. The V1 complex consists of three catalytic AB heterodimers that form a heterohexamer, three peripheral stalks each consisting of EG heterodimers, one central rotor including subunits D and F, and the regulatory subunits C and H. The proton translocation complex V0 consists of the proton transport subunit a, a ring of proteolipid subunits c9c'', rotary subunit d, subunits e and f, and the accessory subunits VhaAC45 and ATP6AP2.

The protein localises to the membrane. In terms of biological role, proton-conducting pore forming subunit of the V0 complex of vacuolar(H+)-ATPase (V-ATPase), a multisubunit enzyme composed of a peripheral complex (V1) that hydrolyzes ATP and a membrane integral complex (V0) that translocates protons. V-ATPase is responsible for acidifying and maintaining the pH of intracellular compartments and in some cell types, is targeted to the plasma membrane, where it is responsible for acidifying the extracellular environment. This is V-type proton ATPase 16 kDa proteolipid subunit c from Aedes aegypti (Yellowfever mosquito).